A 663-amino-acid polypeptide reads, in one-letter code: Forkhead protein sep1 (663 aa).

Residues 128-222 constitute a DNA-binding region (fork-head); that stretch reads KPPYSYAMLI…LKLKLRKPGV (95 aa). 2 disordered regions span residues 220–241 and 325–387; these read PGVNSRPAPPVQDVTSSTKYGS and SPLQ…DVET. The span at 340 to 355 shows a compositional bias: low complexity; sequence SPASSASPSESLRNES. The residue at position 446 (serine 446) is a Phosphoserine.

It is found in the nucleus. Required for promoter sequence element PCB-driven, M-phase-specific transcription. Acts as a transcriptional activator with a role in the regulation of mitosis. Regulates septation and the periodic transcription of cdc15. The sequence is that of Forkhead protein sep1 (sep1) from Schizosaccharomyces pombe (strain 972 / ATCC 24843) (Fission yeast).